The chain runs to 559 residues: Glycerol kinase (559 aa).

ADP is bound at residue Thr-20. ATP is bound by residues Thr-20, Ser-21, and Ser-22. Thr-20 provides a ligand contact to sn-glycerol 3-phosphate. An ADP-binding site is contributed by Arg-24. Residues Arg-94, Glu-95, and Tyr-148 each coordinate sn-glycerol 3-phosphate. The glycerol site is built by Arg-94, Glu-95, and Tyr-148. Residue Gly-252 participates in beta-D-fructose 1,6-bisphosphate binding. Asp-265 serves as a coordination point for sn-glycerol 3-phosphate. Residues Asp-265 and Gln-266 each coordinate glycerol. 4 residues coordinate ADP: Thr-287, Gly-332, Gly-433, and Asn-437. Thr-287, Gly-332, and Gly-433 together coordinate ATP. A helical transmembrane segment spans residues 532-552 (IFCSLPLGFFIVSSMVMLIGA).

The protein belongs to the FGGY kinase family. As to expression, widely expressed in fetal and adult tissues. In terms of tissue distribution, the sole isoform expressed in adult liver and kidney.

It is found in the mitochondrion outer membrane. It localises to the nucleus. The protein resides in the cytoplasm. Its subcellular location is the cytosol. It catalyses the reaction glycerol + ATP = sn-glycerol 3-phosphate + ADP + H(+). It participates in polyol metabolism; glycerol degradation via glycerol kinase pathway; sn-glycerol 3-phosphate from glycerol: step 1/1. Potassium and magnesium-dependent. Kinase that plays a key role in glycerol metabolism, catalyzing its phosphorylation to produce sn-glycerol 3-phosphate. Sn-glycerol 3-phosphate is a crucial intermediate in various metabolic pathways, such as the synthesis of glycerolipids and triglycerides, glycogenesis, glycolysis and gluconeogenesis. The chain is Glycerol kinase from Homo sapiens (Human).